Consider the following 205-residue polypeptide: Endoplasmic reticulum membrane protein complex subunit 10 (205 aa).

The first 17 residues, 1–17, serve as a signal peptide directing secretion; the sequence is MLVRLLRVILLASMVFC. Residues 18–172 are Lumenal-facing; sequence ADILQLSYSD…VKEVSWFQKN (155 aa). Asparagine 47 is a glycosylation site (N-linked (GlcNAc...) asparagine). Residues 173–190 traverse the membrane as a helical segment; the sequence is WKMLLLGLLIYNFVAGSA. The Cytoplasmic segment spans residues 191–205; it reads KKQQQGGAGADQKTE.

As to quaternary structure, component of the ER membrane protein complex (EMC).

Its subcellular location is the endoplasmic reticulum membrane. In terms of biological role, part of the endoplasmic reticulum membrane protein complex (EMC) that enables the energy-independent insertion into endoplasmic reticulum membranes of newly synthesized membrane proteins. Preferentially accommodates proteins with transmembrane domains that are weakly hydrophobic or contain destabilizing features such as charged and aromatic residues. Involved in the cotranslational insertion of multi-pass membrane proteins in which stop-transfer membrane-anchor sequences become ER membrane spanning helices. It is also required for the post-translational insertion of tail-anchored/TA proteins in endoplasmic reticulum membranes. By mediating the proper cotranslational insertion of N-terminal transmembrane domains in an N-exo topology, with translocated N-terminus in the lumen of the ER, controls the topology of multi-pass membrane proteins. This is Endoplasmic reticulum membrane protein complex subunit 10 from Saccharomyces cerevisiae (strain ATCC 204508 / S288c) (Baker's yeast).